Here is a 1035-residue protein sequence, read N- to C-terminus: Probable LRR receptor-like serine/threonine-protein kinase At1g53440 (1035 aa).

Positions 1-26 are cleaved as a signal peptide; it reads MGFFFSTRKGLLLIIFICLDIFGSNA. Topologically, residues 27–607 are extracellular; that stretch reads QLLPEDEVQT…VDTGKPLSNG (581 aa). N-linked (GlcNAc...) asparagine glycosylation is found at N46, N75, N83, and N110. 7 LRR repeats span residues 87–110, 111–135, 137–158, 160–182, 183–206, 208–232, and 234–254; these read VCRV…EFGN, LTRL…LSQI, LEIL…LGQI, TLTD…LGNL, RSLK…LSNL, NLTN…NWTR, and VRLD…ISNL. N194, N208, and N229 each carry an N-linked (GlcNAc...) asparagine glycan. N-linked (GlcNAc...) asparagine glycosylation is found at N256 and N277. LRR repeat units lie at residues 278–302, 303–326, 328–349, and 350–372; these read MTNM…IGTS, MTML…TFRS, NAFN…QFIL, and DSKQ…SCNQ. Residues N317, N337, N361, N386, N469, and N559 are each glycosylated (N-linked (GlcNAc...) asparagine). A helical membrane pass occupies residues 608–628; it reads VVAGIVIAACVAFGLLVLVIL. Residues 629-1035 lie on the Cytoplasmic side of the membrane; it reads RLTGYLGGKE…LDDLTDVEIE (407 aa). Position 656 is a phosphothreonine (T656). Residues 667–948 enclose the Protein kinase domain; sequence FDPENKIGEG…QGKIKVQPPL (282 aa). ATP is bound by residues 673–681 and K695; that span reads IGEGGFGPV. Position 740 is a phosphotyrosine (Y740). D793 (proton acceptor) is an active-site residue. S826 is subject to Phosphoserine. Phosphothreonine is present on residues T827 and T832. The residue at position 840 (Y840) is a Phosphotyrosine. Residues 969 to 1035 form a disordered region; the sequence is LSQDSESQVS…LDDLTDVEIE (67 aa). Residues 972 to 981 show a composition bias toward polar residues; that stretch reads DSESQVSTYT. The segment covering 1009–1023 has biased composition (low complexity); it reads SLLQQEEGNSSSSSR.

Belongs to the protein kinase superfamily. Ser/Thr protein kinase family.

The protein localises to the cell membrane. It catalyses the reaction L-seryl-[protein] + ATP = O-phospho-L-seryl-[protein] + ADP + H(+). The catalysed reaction is L-threonyl-[protein] + ATP = O-phospho-L-threonyl-[protein] + ADP + H(+). This chain is Probable LRR receptor-like serine/threonine-protein kinase At1g53440, found in Arabidopsis thaliana (Mouse-ear cress).